Reading from the N-terminus, the 162-residue chain is MSIFNEARLETWNELKGLSDEKLNQKPSAEEWSIREVLDHLKKIDMTAQKMLKERVKDAPIKEIEEKPLEVAQDRNNKRKAPSHLEPAHDFISGSQMKRELDVVREQLTAAIASLKEEDFERVLPHPVFQELTVRQWIDFIGHHEKRHLSQMKEIKEKIERA.

The segment covering 65–76 (EEKPLEVAQDRN) has biased composition (basic and acidic residues). The interval 65–93 (EEKPLEVAQDRNNKRKAPSHLEPAHDFIS) is disordered.

This is an uncharacterized protein from Bacillus subtilis (strain 168).